The chain runs to 290 residues: UPF0761 membrane protein YihY (290 aa).

6 helical membrane passes run 44–64 (LLSLVPLIAVVFALFAAFPMF), 104–124 (VGACGLIVTALLLMYAIDSAL), 140–160 (FAVYWMILTLGPLLAGASLAI), 183–203 (VLPLLLSWISFWLLYSIVPTT), 210–230 (AIVGAFVAALLFEAGKKGFAL), and 244–264 (VLAVIPILFVWVYWTWCIVLL).

The protein belongs to the UPF0761 family.

The protein localises to the cell inner membrane. This is UPF0761 membrane protein YihY from Salmonella arizonae (strain ATCC BAA-731 / CDC346-86 / RSK2980).